The primary structure comprises 83 residues: Mu-theraphotoxin-Hhn2j 1 (83 aa).

The N-terminal stretch at M1–A21 is a signal peptide. Residues S22–R48 constitute a propeptide that is removed on maturation. 3 disulfide bridges follow: C50-C65, C57-C70, and C64-C77. A Leucine amide modification is found at L81.

The protein belongs to the neurotoxin 10 (Hwtx-1) family. 15 (Hntx-3) subfamily. In terms of assembly, monomer. As to expression, expressed by the venom gland.

The protein resides in the secreted. In terms of biological role, lethal neurotoxin. Selectively blocks tetrodotoxin-sensitive voltage-gated sodium channels (Nav). Does not affect tetrodotoxin-resistant voltage-gated sodium channels or calcium channels. The protein is Mu-theraphotoxin-Hhn2j 1 of Cyriopagopus hainanus (Chinese bird spider).